Here is a 207-residue protein sequence, read N- to C-terminus: Intraflagellar transport protein 43 homolog A (207 aa).

The interval 1-104 (MDDNLQLGDS…GSDDEGDIPV (104 aa)) is disordered.

It belongs to the IFT43 family. As to quaternary structure, component of IFT complex A.

Functionally, component of IFT complex A (IFT-A) involved in retrograde ciliary transport along microtubules from the ciliary tip to the base. The sequence is that of Intraflagellar transport protein 43 homolog A (ift43a) from Salmo salar (Atlantic salmon).